A 171-amino-acid polypeptide reads, in one-letter code: Endoribonuclease YbeY (171 aa).

3 residues coordinate Zn(2+): His126, His130, and His136.

Belongs to the endoribonuclease YbeY family. Requires Zn(2+) as cofactor.

Its subcellular location is the cytoplasm. Single strand-specific metallo-endoribonuclease involved in late-stage 70S ribosome quality control and in maturation of the 3' terminus of the 16S rRNA. The polypeptide is Endoribonuclease YbeY (Rhizobium leguminosarum bv. trifolii (strain WSM2304)).